A 94-amino-acid chain; its full sequence is Conotoxin Cal22a (94 aa).

An N-terminal signal peptide occupies residues 1 to 24 (MMSTKGITLFLCLLLLALATSVNG). The propeptide occupies 25-44 (GQGTRRSRMTRALHGGRPSA).

Contains 4 disulfide bonds. In terms of tissue distribution, expressed by the venom duct.

The protein resides in the secreted. Functionally, probable neurotoxin with unknown target. Possibly targets ion channels. The protein is Conotoxin Cal22a of Californiconus californicus (California cone).